A 149-amino-acid chain; its full sequence is Large ribosomal subunit protein bL9 (149 aa).

It belongs to the bacterial ribosomal protein bL9 family.

Binds to the 23S rRNA. The protein is Large ribosomal subunit protein bL9 of Actinobacillus pleuropneumoniae serotype 3 (strain JL03).